Reading from the N-terminus, the 164-residue chain is Transcription elongation factor GreA (164 aa).

It belongs to the GreA/GreB family.

Functionally, necessary for efficient RNA polymerase transcription elongation past template-encoded arresting sites. The arresting sites in DNA have the property of trapping a certain fraction of elongating RNA polymerases that pass through, resulting in locked ternary complexes. Cleavage of the nascent transcript by cleavage factors such as GreA or GreB allows the resumption of elongation from the new 3'terminus. GreA releases sequences of 2 to 3 nucleotides. This Helicobacter pylori (strain J99 / ATCC 700824) (Campylobacter pylori J99) protein is Transcription elongation factor GreA.